A 100-amino-acid polypeptide reads, in one-letter code: Guanine nucleotide exchange factor MSS4 homolog (100 aa).

The MSS4 domain occupies 1–100; it reads MSNLRIVCQH…YLLLCSLEKN (100 aa). Zn(2+) is bound by residues Cys8, Cys11, Cys73, and Cys76.

The protein belongs to the DSS4/MSS4 family.

In terms of biological role, guanine-nucleotide-releasing protein that acts on members of the sec4/ypt1/rab subfamily. This chain is Guanine nucleotide exchange factor MSS4 homolog, found in Schizosaccharomyces pombe (strain 972 / ATCC 24843) (Fission yeast).